We begin with the raw amino-acid sequence, 606 residues long: V-type proton ATPase catalytic subunit A (606 aa).

239–246 is an ATP binding site; sequence GAFGCGKT.

Belongs to the ATPase alpha/beta chains family. V-ATPase is a heteromultimeric enzyme made up of two complexes: the ATP-hydrolytic V1 complex and the proton translocation V0 complex. The V1 complex consists of three catalytic AB heterodimers that form a heterohexamer, three peripheral stalks each consisting of EG heterodimers, one central rotor including subunits D and F, and the regulatory subunits C and H. The proton translocation complex V0 consists of the proton transport subunit a, a ring of proteolipid subunits c9c'', rotary subunit d, subunits e and f, and the accessory subunits vah-19/Ac45 and vah-20/PRR.

It catalyses the reaction ATP + H2O + 4 H(+)(in) = ADP + phosphate + 5 H(+)(out). Catalytic subunit of the V1 complex of vacuolar(H+)-ATPase (V-ATPase), a multisubunit enzyme composed of a peripheral complex (V1) that hydrolyzes ATP and a membrane integral complex (V0) that translocates protons. V-ATPase is responsible for acidifying and maintaining the pH of intracellular compartments and in some cell types, is targeted to the plasma membrane, where it is responsible for acidifying the extracellular environment. Required along with other vacuolar ATPase components for the removal of protein aggregates which form in immature oocytes in the distal gonad. This removal occurs as the oocytes mature and move to the proximal gonad, is triggered by the introduction of sperm through mating and occurs before fertilization. The introduction of sperm triggers V-ATPase accumulation in proximal oocytes and induces lysosomal acidification which leads to engulfing of protein aggregates by lysosomes and subsequent clearance of the aggregates. Lysosomal acidification also leads to changes in mitochondrial morphology and function. Mitochondria in distal immature oocytes are fragmented, produce high levels of reactive oxygen species (ROS) and have high membrane potential, indicative of metabolic inactivity. In contrast, mitochondria in proximal mature oocytes are tubular with lower ROS levels and membrane potential, indicative of an active metabolic state required for aggregate mobilization before clearance. Involved in receptor-mediated endocytosis. In Caenorhabditis briggsae, this protein is V-type proton ATPase catalytic subunit A.